Reading from the N-terminus, the 422-residue chain is uncharacterized protein (422 aa).

The disordered stretch occupies residues 1–22 (MIQNNPKSIGSSSNKSARSSGS). Positions 7-22 (KSIGSSSNKSARSSGS) are enriched in low complexity.

This is an uncharacterized protein from Acanthamoeba polyphaga mimivirus (APMV).